The following is a 210-amino-acid chain: MVDFKMTKEGLVLLIRDYQNLEEVLNAISARITQMGGFFAKGDRISLMIENHNKHSQDIPKIVSHLRNLGLEVSQILVGSTVGGKENDLKVESRTTVESTGKVIKRNIRSGQTVVHSGDVIVFGNVNKGAEILAGGSVVVFGKAQGNIRAGLNEGEQAVVAALDLQTSLIQIAGFITHSKGEENVPSIAHVKGNRIVIEPFDKVSFERSE.

It belongs to the MinC family. As to quaternary structure, interacts with MinD and FtsZ.

In terms of biological role, cell division inhibitor that blocks the formation of polar Z ring septums. Rapidly oscillates between the poles of the cell to destabilize FtsZ filaments that have formed before they mature into polar Z rings. Prevents FtsZ polymerization. This Thermotoga petrophila (strain ATCC BAA-488 / DSM 13995 / JCM 10881 / RKU-1) protein is Probable septum site-determining protein MinC.